Reading from the N-terminus, the 55-residue chain is Conotoxin Cal14.14 (55 aa).

The N-terminal stretch at 1-20 is a signal peptide; sequence MFRLGVFLLTFLLLVSMATS. 2 disulfide bridges follow: cysteine 34-cysteine 48 and cysteine 38-cysteine 52.

As to expression, expressed by the venom duct.

It localises to the secreted. Functionally, probable neurotoxin. The chain is Conotoxin Cal14.14 from Californiconus californicus (California cone).